A 798-amino-acid polypeptide reads, in one-letter code: ATP-dependent RNA helicase DBP4 (798 aa).

The tract at residues 1 to 30 is disordered; that stretch reads MAHKGKAAPAKPPTSHKKEVKSLKRKRGQE. The span at 16 to 30 shows a compositional bias: basic and acidic residues; sequence HKKEVKSLKRKRGQE. The short motif at 49–77 is the Q motif element; that stretch reads KAFAELPLSEPTAKGVRDSHFETLTDIQA. The 175-residue stretch at 80-254 folds into the Helicase ATP-binding domain; the sequence is IPLALKGRDI…RLSLKDPEYV (175 aa). 93-100 is a binding site for ATP; the sequence is AKTGSGKT. The DEAD box signature appears at 202–205; it reads DEAD. Residues 280 to 435 enclose the Helicase C-terminal domain; sequence KLDTLWGFIK…SKKKSIRDEL (156 aa). Disordered stretches follow at residues 503-544 and 653-781; these read QKGE…RTKA and QDED…LDHE. Composition is skewed to basic and acidic residues over residues 529 to 544 and 666 to 689; these read DDKP…RTKA and ALRK…DKAL. Residues 690–704 show a composition bias toward basic residues; that stretch reads AKQKKREKKLKRKAR. Over residues 767–781 the composition is skewed to basic and acidic residues; the sequence is DERKPKSKVIELDHE.

The protein belongs to the DEAD box helicase family. DDX10/DBP4 subfamily. Interacts with the U3 and U14 snoRNAs. Associates with pre-ribosomal complexes.

It is found in the nucleus. It localises to the nucleolus. The catalysed reaction is ATP + H2O = ADP + phosphate + H(+). Functionally, ATP-dependent RNA helicase required for ribosome biogenesis. Involved in the release of U14 snoRNA in pre-ribosomal complexes. Required for pre-rRNA cleavage at site A2. This is ATP-dependent RNA helicase DBP4 (DBP4) from Pyricularia oryzae (strain 70-15 / ATCC MYA-4617 / FGSC 8958) (Rice blast fungus).